The sequence spans 391 residues: Metallophosphoesterase 1 (391 aa).

Residues 25-45 (TVVIISVLLFCEYFIYHLVIF) traverse the membrane as a helical segment. A divalent metal cation is bound by residues Asp72, Asp114, Asn152, His244, His298, and His300. The chain crosses the membrane as a helical span at residues 352–372 (VLATYGAAAVFLVVLILAHLE).

The protein belongs to the metallophosphoesterase superfamily. MPPE1 family. As to quaternary structure, interacts with GPI-anchor proteins (via the GPI portion). Interacts with TMED10. Mn(2+) serves as cofactor.

Its subcellular location is the endoplasmic reticulum-Golgi intermediate compartment membrane. In terms of biological role, metallophosphoesterase that catalyzes the removal of a side-chain ethanolamine-phosphate (EtNP) from the second mannose of the GPI-anchor protein intermediate. Participates in the glycan remodeling steps of GPI-anchor maturation to allow an efficient transport of GPI-anchor proteins from the endoplasmic reticulum to the Golgi. This Cricetulus griseus (Chinese hamster) protein is Metallophosphoesterase 1.